The following is a 255-amino-acid chain: tRNA (guanine-N(1)-)-methyltransferase (255 aa).

S-adenosyl-L-methionine is bound by residues glycine 113 and isoleucine 133–leucine 138.

It belongs to the RNA methyltransferase TrmD family. As to quaternary structure, homodimer.

It localises to the cytoplasm. It catalyses the reaction guanosine(37) in tRNA + S-adenosyl-L-methionine = N(1)-methylguanosine(37) in tRNA + S-adenosyl-L-homocysteine + H(+). In terms of biological role, specifically methylates guanosine-37 in various tRNAs. The chain is tRNA (guanine-N(1)-)-methyltransferase from Salmonella choleraesuis (strain SC-B67).